We begin with the raw amino-acid sequence, 150 residues long: Putative pre-16S rRNA nuclease (150 aa).

It belongs to the YqgF nuclease family.

Its subcellular location is the cytoplasm. Could be a nuclease involved in processing of the 5'-end of pre-16S rRNA. The protein is Putative pre-16S rRNA nuclease of Chlamydia abortus (strain DSM 27085 / S26/3) (Chlamydophila abortus).